Reading from the N-terminus, the 398-residue chain is Tryptophan synthase beta chain (398 aa).

Position 87 is an N6-(pyridoxal phosphate)lysine (Lys-87).

Belongs to the TrpB family. Tetramer of two alpha and two beta chains. Pyridoxal 5'-phosphate serves as cofactor.

It catalyses the reaction (1S,2R)-1-C-(indol-3-yl)glycerol 3-phosphate + L-serine = D-glyceraldehyde 3-phosphate + L-tryptophan + H2O. It participates in amino-acid biosynthesis; L-tryptophan biosynthesis; L-tryptophan from chorismate: step 5/5. Functionally, the beta subunit is responsible for the synthesis of L-tryptophan from indole and L-serine. The chain is Tryptophan synthase beta chain from Blochmanniella floridana.